The chain runs to 1138 residues: Lysylphosphatidylglycerol biosynthesis bifunctional protein LysX (1138 aa).

The segment covering 1–15 (MALDTPSSDLPVSTD) has biased composition (polar residues). Residues 1–34 (MALDTPSSDLPVSTDDTAEHQPTPAHRPPSAADR) form a disordered region. The segment at 1–646 (MALDTPSSDL…LIAQLESEED (646 aa)) is phosphatidylglycerol lysyltransferase. 6 consecutive transmembrane segments (helical) span residues 56 to 76 (IAGTVVGVLAGIALLSSIFPL), 92 to 112 (IVSLPNTSLAWAFVLALVAIA), 119 to 139 (IAWWIATIYLVLFMVSNALLL), 155 to 175 (IQIWIGLGIDAAALIFLIVTY), 190 to 210 (ALGVLIVGLTAATLVGWGLVW), and 247 to 267 (IVIDSALGLLGALALIAAATV). Residues 647-1138 (RTAVEVHRPE…AFPMVKPTDA (492 aa)) are lysine--tRNA ligase. The segment at residues 698-772 (VTIAGRVTKM…GELSVLIDAW (75 aa)) is a DNA-binding region (OB). 2 residues coordinate Mg(2+): D1048 and E1055.

This sequence in the N-terminal section; belongs to the LPG synthetase family. The protein in the C-terminal section; belongs to the class-II aminoacyl-tRNA synthetase family. The cofactor is Mg(2+).

Its subcellular location is the cell membrane. The catalysed reaction is tRNA(Lys) + L-lysine + ATP = L-lysyl-tRNA(Lys) + AMP + diphosphate. The enzyme catalyses L-lysyl-tRNA(Lys) + a 1,2-diacyl-sn-glycero-3-phospho-(1'-sn-glycerol) = a 1,2-diacyl-sn-glycero-3-phospho-1'-(3'-O-L-lysyl)-sn-glycerol + tRNA(Lys). In terms of biological role, catalyzes the production of L-lysyl-tRNA(Lys)transfer and the transfer of a lysyl group from L-lysyl-tRNA(Lys) to membrane-bound phosphatidylglycerol (PG), which produces lysylphosphatidylglycerol (LPG), one of the components of the bacterial membrane with a positive net charge. LPG synthesis contributes to the resistance to cationic antimicrobial peptides (CAMPs) and likely protects M.tuberculosis against the CAMPs produced by competiting microorganisms (bacteriocins). In fact, the modification of anionic phosphatidylglycerol with positively charged L-lysine results in repulsion of the peptides. This is Lysylphosphatidylglycerol biosynthesis bifunctional protein LysX (lysX) from Gordonia bronchialis (strain ATCC 25592 / DSM 43247 / BCRC 13721 / JCM 3198 / KCTC 3076 / NBRC 16047 / NCTC 10667) (Rhodococcus bronchialis).